Consider the following 273-residue polypeptide: 4-hydroxy-tetrahydrodipicolinate reductase (273 aa).

Residues 12–17 (GAGGRM) and E38 each bind NAD(+). R39 contacts NADP(+). NAD(+) contacts are provided by residues 102–104 (GTT) and 126–129 (AANF). H159 (proton donor/acceptor) is an active-site residue. A (S)-2,3,4,5-tetrahydrodipicolinate-binding site is contributed by H160. K163 serves as the catalytic Proton donor. 169 to 170 (GT) serves as a coordination point for (S)-2,3,4,5-tetrahydrodipicolinate.

It belongs to the DapB family. Homotetramer.

The protein resides in the cytoplasm. The enzyme catalyses (S)-2,3,4,5-tetrahydrodipicolinate + NAD(+) + H2O = (2S,4S)-4-hydroxy-2,3,4,5-tetrahydrodipicolinate + NADH + H(+). The catalysed reaction is (S)-2,3,4,5-tetrahydrodipicolinate + NADP(+) + H2O = (2S,4S)-4-hydroxy-2,3,4,5-tetrahydrodipicolinate + NADPH + H(+). It functions in the pathway amino-acid biosynthesis; L-lysine biosynthesis via DAP pathway; (S)-tetrahydrodipicolinate from L-aspartate: step 4/4. Its function is as follows. Catalyzes the conversion of 4-hydroxy-tetrahydrodipicolinate (HTPA) to tetrahydrodipicolinate. The chain is 4-hydroxy-tetrahydrodipicolinate reductase from Salmonella paratyphi A (strain ATCC 9150 / SARB42).